The sequence spans 116 residues: Ribonuclease P protein component (116 aa).

This sequence belongs to the RnpA family. Consists of a catalytic RNA component (M1 or rnpB) and a protein subunit.

It catalyses the reaction Endonucleolytic cleavage of RNA, removing 5'-extranucleotides from tRNA precursor.. Functionally, RNaseP catalyzes the removal of the 5'-leader sequence from pre-tRNA to produce the mature 5'-terminus. It can also cleave other RNA substrates such as 4.5S RNA. The protein component plays an auxiliary but essential role in vivo by binding to the 5'-leader sequence and broadening the substrate specificity of the ribozyme. The chain is Ribonuclease P protein component from Thermoanaerobacter pseudethanolicus (strain ATCC 33223 / 39E) (Clostridium thermohydrosulfuricum).